The chain runs to 382 residues: MNLKEKTRALFAEVFGYPATHTIQAPGRVNLIGEHTDYNDGFVLPCAIDYQTVISCAPRDDRTVRVIAADYDNQVDEFSLDAPIVTHDSQQWSNYVRGVVKHLQQRNNAFGGVDMVISGNVPQGAGLSSSASLEVAVGTVFQQLYHLPLDGAQIALNGQEAENQFVGCNCGIMDQLISALGKKDHALLIDCRSLGTKAVSMPKGVAVVIINSNFKRTLVGSEYNTRREQCETGARFFQQPALRDVSLEAFNAVACELDPVVAKRVRHVLSENARTVEAASALEKGDLQRMGQLMAESHASMRDDFEITVPQIDTLVEIVKATIGDKGGVRMTGGGFGGCIVALIPEDLVPAVQQAVAQQYEAKTGIKETFYVCKPSQGAGQC.

Position 34–37 (34–37) interacts with substrate; it reads EHTD. 124-130 serves as a coordination point for ATP; the sequence is GAGLSSS. Serine 130 and glutamate 162 together coordinate Mg(2+). Aspartate 174 serves as the catalytic Proton acceptor. A substrate-binding site is contributed by tyrosine 223.

Belongs to the GHMP kinase family. GalK subfamily.

It is found in the cytoplasm. It catalyses the reaction alpha-D-galactose + ATP = alpha-D-galactose 1-phosphate + ADP + H(+). It functions in the pathway carbohydrate metabolism; galactose metabolism. Functionally, catalyzes the transfer of the gamma-phosphate of ATP to D-galactose to form alpha-D-galactose-1-phosphate (Gal-1-P). This is Galactokinase from Salmonella arizonae (strain ATCC BAA-731 / CDC346-86 / RSK2980).